We begin with the raw amino-acid sequence, 264 residues long: Small ribosomal subunit protein eS1 (264 aa).

A disordered region spans residues 233 to 264 (GEGGGAGKPAGDETGAKVERADGYEPPVQESV). Positions 242-255 (AGDETGAKVERADG) are enriched in basic and acidic residues.

The protein belongs to the eukaryotic ribosomal protein eS1 family. As to quaternary structure, component of the small ribosomal subunit. Mature ribosomes consist of a small (40S) and a large (60S) subunit. The 40S subunit contains about 33 different proteins and 1 molecule of RNA (18S). The 60S subunit contains about 49 different proteins and 3 molecules of RNA (28S, 5.8S and 5S). Part of the small subunit (SSU) processome, composed of more than 70 proteins and the RNA chaperone small nucleolar RNA (snoRNA) U3.

It localises to the cytoplasm. Its subcellular location is the nucleus. The protein localises to the nucleolus. Its function is as follows. Component of the small ribosomal subunit. The ribosome is a large ribonucleoprotein complex responsible for the synthesis of proteins in the cell. Part of the small subunit (SSU) processome, first precursor of the small eukaryotic ribosomal subunit. During the assembly of the SSU processome in the nucleolus, many ribosome biogenesis factors, an RNA chaperone and ribosomal proteins associate with the nascent pre-rRNA and work in concert to generate RNA folding, modifications, rearrangements and cleavage as well as targeted degradation of pre-ribosomal RNA by the RNA exosome. May play a role during erythropoiesis. The polypeptide is Small ribosomal subunit protein eS1 (rps3a) (Xenopus tropicalis (Western clawed frog)).